The sequence spans 560 residues: Mannosyl-oligosaccharide 1,2-alpha-mannosidase MNS1 (560 aa).

The Cytoplasmic portion of the chain corresponds to 1 to 27; sequence MARSRSISGYGIWKYLNPAYYLRRPRR. Residues 28–47 traverse the membrane as a helical; Signal-anchor for type II membrane protein segment; sequence LALLFIVFVSVSMLVWDRIN. Residues 47 to 80 adopt a coiled-coil conformation; sequence NLAREHEVEVFKLNEEVSRLEQMLEELNGGVGNK. At 48 to 560 the chain is on the lumenal side; sequence LAREHEVEVF…QRKFGHQINV (513 aa). E179 (proton donor) is an active-site residue. Residue D312 is part of the active site. A glycan (N-linked (GlcNAc...) asparagine) is linked at N326. A disulfide bridge connects residues C377 and C409. Catalysis depends on E423, which acts as the Proton donor. E445 is an active-site residue. N459 is a glycosylation site (N-linked (GlcNAc...) asparagine). T529 lines the Ca(2+) pocket.

It belongs to the glycosyl hydrolase 47 family. It depends on Ca(2+) as a cofactor. Mn(2+) serves as cofactor. Mg(2+) is required as a cofactor. Expressed in flowers, siliques, stems, leaves, roots, pollen grains, shoot apical meristems, hypocotyls and upper region of the root.

Its subcellular location is the golgi apparatus membrane. It carries out the reaction N(4)-(alpha-D-Man-(1-&gt;2)-alpha-D-Man-(1-&gt;2)-alpha-D-Man-(1-&gt;3)-[alpha-D-Man-(1-&gt;2)-alpha-D-Man-(1-&gt;3)-[alpha-D-Man-(1-&gt;2)-alpha-D-Man-(1-&gt;6)]-alpha-D-Man-(1-&gt;6)]-beta-D-Man-(1-&gt;4)-beta-D-GlcNAc-(1-&gt;4)-beta-D-GlcNAc)-L-asparaginyl-[protein] (N-glucan mannose isomer 9A1,2,3B1,2,3) + 4 H2O = N(4)-(alpha-D-Man-(1-&gt;3)-[alpha-D-Man-(1-&gt;3)-[alpha-D-Man-(1-&gt;6)]-alpha-D-Man-(1-&gt;6)]-beta-D-Man-(1-&gt;4)-beta-D-GlcNAc-(1-&gt;4)-beta-D-GlcNAc)-L-asparaginyl-[protein] (N-glucan mannose isomer 5A1,2) + 4 beta-D-mannose. The enzyme catalyses N(4)-(alpha-D-Man-(1-&gt;2)-alpha-D-Man-(1-&gt;2)-alpha-D-Man-(1-&gt;3)-[alpha-D-Man-(1-&gt;3)-[alpha-D-Man-(1-&gt;2)-alpha-D-Man-(1-&gt;6)]-alpha-D-Man-(1-&gt;6)]-beta-D-Man-(1-&gt;4)-beta-D-GlcNAc-(1-&gt;4)-beta-D-GlcNAc)-L-asparaginyl-[protein] (N-glucan mannose isomer 8A1,2,3B1,3) + 3 H2O = N(4)-(alpha-D-Man-(1-&gt;3)-[alpha-D-Man-(1-&gt;3)-[alpha-D-Man-(1-&gt;6)]-alpha-D-Man-(1-&gt;6)]-beta-D-Man-(1-&gt;4)-beta-D-GlcNAc-(1-&gt;4)-beta-D-GlcNAc)-L-asparaginyl-[protein] (N-glucan mannose isomer 5A1,2) + 3 beta-D-mannose. It catalyses the reaction N(4)-(alpha-D-Man-(1-&gt;2)-alpha-D-Man-(1-&gt;2)-alpha-D-Man-(1-&gt;3)-[alpha-D-Man-(1-&gt;2)-alpha-D-Man-(1-&gt;3)-[alpha-D-Man-(1-&gt;2)-alpha-D-Man-(1-&gt;6)]-alpha-D-Man-(1-&gt;6)]-beta-D-Man-(1-&gt;4)-beta-D-GlcNAc-(1-&gt;4)-beta-D-GlcNAc)-L-asparaginyl-[protein] (N-glucan mannose isomer 9A1,2,3B1,2,3) + H2O = N(4)-(alpha-D-Man-(1-&gt;2)-alpha-D-Man-(1-&gt;2)-alpha-D-Man-(1-&gt;3)-[alpha-D-Man-(1-&gt;3)-[alpha-D-Man-(1-&gt;2)-alpha-D-Man-(1-&gt;6)]-alpha-D-Man-(1-&gt;6)]-beta-D-Man-(1-&gt;4)-beta-D-GlcNAc-(1-&gt;4)-beta-D-GlcNAc)-L-asparaginyl-[protein] (N-glucan mannose isomer 8A1,2,3B1,3) + beta-D-mannose. It participates in protein modification; protein glycosylation. Its activity is regulated as follows. Inhibited by kifunensine and 1-deoxymannojirimycin, but not by swainsonine. Its function is as follows. Class I alpha-mannosidase essential for early N-glycan processing. Progressively trims alpha-1,2-linked mannose residues. Produces Man(5)GlcNAc(2) from Man(8)GlcNAc(2), but only Man(6)GlcNAc(2) from Man(9)GlcNAc(2). Has difficulty acting on the terminal mannose of the b-branch. Involved in root development and cell wall biosynthesis. This is Mannosyl-oligosaccharide 1,2-alpha-mannosidase MNS1 (MNS1) from Arabidopsis thaliana (Mouse-ear cress).